A 531-amino-acid chain; its full sequence is Polyamine aminopropyltransferase 1 (531 aa).

Helical transmembrane passes span 27–47, 59–79, 96–116, 122–142, 160–180, 188–208, and 218–238; these read FLLLLAVFLCAACGLVYELAL, VLQTSVVISVMVFAMGVGSLA, GVLALVGGLSVLMLYAAFAWL, AMIVVSLVVGLLIGAEIPLLM, MFAVDYIGALVGGLCFPLFLL, GALVVGVVNAVAGVIVVVFIF, and AGLLAGVALVLAALGTTYVLA. The tract at residues 205 to 476 is spermidine synthase; the sequence is VFIFRRQTGR…VLARPGTEAP (272 aa). A PABS domain is found at 233-471; it reads TTYVLADDLE…GNWGFVLARP (239 aa). Gln263 lines the S-methyl-5'-thioadenosine pocket. 2 residues coordinate spermidine: His298 and Asp320. S-methyl-5'-thioadenosine is bound by residues Glu340 and 374 to 375; that span reads DA. The active-site Proton acceptor is the Asp392.

This sequence belongs to the spermidine/spermine synthase family. In terms of assembly, homodimer or homotetramer.

The protein localises to the cell membrane. It catalyses the reaction S-adenosyl 3-(methylsulfanyl)propylamine + putrescine = S-methyl-5'-thioadenosine + spermidine + H(+). It functions in the pathway amine and polyamine biosynthesis; spermidine biosynthesis; spermidine from putrescine: step 1/1. In terms of biological role, catalyzes the irreversible transfer of a propylamine group from the amino donor S-adenosylmethioninamine (decarboxy-AdoMet) to putrescine (1,4-diaminobutane) to yield spermidine. The sequence is that of Polyamine aminopropyltransferase 1 from Streptomyces coelicolor (strain ATCC BAA-471 / A3(2) / M145).